Here is a 64-residue protein sequence, read N- to C-terminus: Probable cytochrome c oxidase subunit 5C-3 (64 aa).

The helical transmembrane segment at 15–34 (SVVKELVIGLTLGLAAGGLW) threads the bilayer.

This sequence belongs to the cytochrome c oxidase subunit 5C family.

It is found in the mitochondrion inner membrane. In terms of biological role, this protein is one of the nuclear-coded polypeptide chains of cytochrome c oxidase, the terminal oxidase in mitochondrial electron transport. In Arabidopsis thaliana (Mouse-ear cress), this protein is Probable cytochrome c oxidase subunit 5C-3.